Here is a 593-residue protein sequence, read N- to C-terminus: NADH-quinone oxidoreductase subunit C/D (593 aa).

The segment at M1 to Q184 is NADH dehydrogenase I subunit C. The tract at residues D208–R593 is NADH dehydrogenase I subunit D.

This sequence in the N-terminal section; belongs to the complex I 30 kDa subunit family. The protein in the C-terminal section; belongs to the complex I 49 kDa subunit family. As to quaternary structure, NDH-1 is composed of 13 different subunits. Subunits NuoB, CD, E, F, and G constitute the peripheral sector of the complex.

It localises to the cell inner membrane. It carries out the reaction a quinone + NADH + 5 H(+)(in) = a quinol + NAD(+) + 4 H(+)(out). In terms of biological role, NDH-1 shuttles electrons from NADH, via FMN and iron-sulfur (Fe-S) centers, to quinones in the respiratory chain. The immediate electron acceptor for the enzyme in this species is believed to be ubiquinone. Couples the redox reaction to proton translocation (for every two electrons transferred, four hydrogen ions are translocated across the cytoplasmic membrane), and thus conserves the redox energy in a proton gradient. This is NADH-quinone oxidoreductase subunit C/D from Pseudomonas paraeruginosa (strain DSM 24068 / PA7) (Pseudomonas aeruginosa (strain PA7)).